The chain runs to 135 residues: Phosphoinositide-interacting protein (135 aa).

Positions M1 to L21 are disordered. A compositionally biased stretch (basic and acidic residues) spans L8–D19. A run of 2 helical transmembrane segments spans residues I54–A74 and P92–I112.

As to quaternary structure, interacts with TRPV1. As to expression, strongly expressed in most dorsal root ganglia (DRG) and trigeminal neurons. Expressed by most peptidergic (CGRP+) and non-peptidergic (IB4+) DRG neurons. Weakly expressed in other parts of the peripheral nervous system (PNS) including sympathetic and enteric neurons. Not expressed in the spinal cord.

Its subcellular location is the membrane. In terms of biological role, regulatory subunit of TRPV1, a molecular sensor of noxious heat and capsaicin. Positively regulates TRPV1 channel activity via phosphatidylinositol 4,5-bisphosphate (PIP2). Binds various phosphoinositide, including phosphatidylinositol 4,5-bisphosphate (PIP2), but not phosphatidylinositol (PI). The polypeptide is Phosphoinositide-interacting protein (Pirt) (Mus musculus (Mouse)).